A 533-amino-acid chain; its full sequence is Peptide chain release factor 3 (533 aa).

Positions 11–284 (RRRRTFAIIS…ALVGLSPEPL (274 aa)) constitute a tr-type G domain. Residues 20–27 (SHPDAGKT), 92–96 (DTPGH), and 146–149 (NKLD) each bind GTP.

The protein belongs to the TRAFAC class translation factor GTPase superfamily. Classic translation factor GTPase family. PrfC subfamily.

The protein localises to the cytoplasm. Increases the formation of ribosomal termination complexes and stimulates activities of RF-1 and RF-2. It binds guanine nucleotides and has strong preference for UGA stop codons. It may interact directly with the ribosome. The stimulation of RF-1 and RF-2 is significantly reduced by GTP and GDP, but not by GMP. The sequence is that of Peptide chain release factor 3 from Ralstonia nicotianae (strain ATCC BAA-1114 / GMI1000) (Ralstonia solanacearum).